Consider the following 394-residue polypeptide: Carbamoyl phosphate synthase small chain (394 aa).

The interval 1–188 (MIRKERAILA…PLPYAFPTLR (188 aa)) is CPSase. L-glutamine contacts are provided by Ser49, Gly240, and Gly242. Residues 192–379 (RVVLMDFGIK…IEEIDAFEGA (188 aa)) enclose the Glutamine amidotransferase type-1 domain. Cys267 acts as the Nucleophile in catalysis. L-glutamine-binding residues include Leu268, Gln271, Asn309, Gly311, and Tyr312. Catalysis depends on residues His352 and Glu354.

The protein belongs to the CarA family. Composed of two chains; the small (or glutamine) chain promotes the hydrolysis of glutamine to ammonia, which is used by the large (or ammonia) chain to synthesize carbamoyl phosphate. Tetramer of heterodimers (alpha,beta)4.

The catalysed reaction is hydrogencarbonate + L-glutamine + 2 ATP + H2O = carbamoyl phosphate + L-glutamate + 2 ADP + phosphate + 2 H(+). The enzyme catalyses L-glutamine + H2O = L-glutamate + NH4(+). It participates in amino-acid biosynthesis; L-arginine biosynthesis; carbamoyl phosphate from bicarbonate: step 1/1. The protein operates within pyrimidine metabolism; UMP biosynthesis via de novo pathway; (S)-dihydroorotate from bicarbonate: step 1/3. Its function is as follows. Small subunit of the glutamine-dependent carbamoyl phosphate synthetase (CPSase). CPSase catalyzes the formation of carbamoyl phosphate from the ammonia moiety of glutamine, carbonate, and phosphate donated by ATP, constituting the first step of 2 biosynthetic pathways, one leading to arginine and/or urea and the other to pyrimidine nucleotides. The small subunit (glutamine amidotransferase) binds and cleaves glutamine to supply the large subunit with the substrate ammonia. The protein is Carbamoyl phosphate synthase small chain of Deinococcus geothermalis (strain DSM 11300 / CIP 105573 / AG-3a).